Here is a 476-residue protein sequence, read N- to C-terminus: Protein transport protein Sec61 subunit alpha-like 2 (476 aa).

Residues 2 to 33 are Cytoplasmic-facing; that stretch reads AIKFLEVIKPFCAVLPEIQKPERRIQFKEKVL. Residues 34–53 form a helical membrane-spanning segment; sequence WTAITLFIFLVCCQIPLFGI. Residues 54-76 lie on the Lumenal side of the membrane; sequence MSSDSADPFYWMRVIMASNRGTL. A helical transmembrane segment spans residues 77 to 96; that stretch reads MELGISPIVTSGLIMQLLAG. Residues 97 to 117 lie on the Cytoplasmic side of the membrane; it reads AKIIEVGDTPKDRALFNGAQK. A helical transmembrane segment spans residues 118–138; that stretch reads LFGMIITIGQAVVYVMTGMYG. At 139–144 the chain is on the lumenal side; sequence DPSEMG. A helical transmembrane segment spans residues 145–165; that stretch reads AGICLLIIIQLFVAGLIVLLL. The Cytoplasmic segment spans residues 166–172; that stretch reads DELLQKG. A helical transmembrane segment spans residues 173–193; sequence YGLGSGISLFIATNICETIVW. Residues 194-240 lie on the Lumenal side of the membrane; the sequence is KAFSPTTVNTGRGTEFEGAIIALFHLLATRTDKVRALREAFYRQNLP. The helical transmembrane segment at 241–261 threads the bilayer; the sequence is NLMNLIATIFVFAVVIYFQGF. Residues 262-288 lie on the Cytoplasmic side of the membrane; that stretch reads RVDLPIKSARYRGQYNTYPIKLFYTSN. Residues 289–309 traverse the membrane as a helical segment; it reads IPIILQSALVSNLYVISQMLS. Topologically, residues 310-354 are lumenal; that stretch reads TRFSGNFLVNLLGTWSDTSTGGPARAYPVGGLCYYLSPPESFGTV. The helical transmembrane segment at 355–375 threads the bilayer; that stretch reads LEDPIHAIIYIIFMLGSCAFF. The Cytoplasmic portion of the chain corresponds to 376-420; the sequence is SKTWIEVSGSSAKDVAKQLKEQQMVMRGHRETSMVHELNRYIPTA. Residues 421–441 traverse the membrane as a helical segment; that stretch reads AAFGGLCIGGLSVMADFLGAI. Residues 442–445 are Lumenal-facing; sequence GSGT. The helical transmembrane segment at 446-462 threads the bilayer; the sequence is GILLAVTIIYQYFEIFV. Residues 463–476 are Cytoplasmic-facing; sequence KEQSEVGSVGALLF.

Belongs to the SecY/SEC61-alpha family. The SEC61 channel-forming translocon complex consists of channel-forming core components SEC61A1, SEC61B and SEC61G and different auxiliary components such as SEC62 and SEC63.

The protein localises to the endoplasmic reticulum membrane. Its function is as follows. Component of SEC61 channel-forming translocon complex that mediates transport of signal peptide-containing precursor polypeptides across the endoplasmic reticulum (ER). Forms a ribosome receptor and a gated pore in the ER membrane, both functions required for cotranslational translocation of nascent polypeptides. This chain is Protein transport protein Sec61 subunit alpha-like 2 (sec61al2), found in Danio rerio (Zebrafish).